Consider the following 55-residue polypeptide: Probable Rubredoxin-2 (55 aa).

Residues 4–54 (MARYQCMCGWVYDEDKGEPSQNIPPGTKFEDLPDTFRCPQCGLGKNAFRKI) form the Rubredoxin-like domain. Residues cysteine 9, cysteine 11, cysteine 41, and cysteine 44 each contribute to the Fe cation site.

The protein belongs to the rubredoxin family. Fe(3+) serves as cofactor.

In terms of biological role, rubredoxin is a small nonheme, iron protein lacking acid-labile sulfide. Its single Fe, chelated to 4 Cys, functions as an electron acceptor and may also stabilize the conformation of the molecule. This is Probable Rubredoxin-2 from Methanocaldococcus jannaschii (strain ATCC 43067 / DSM 2661 / JAL-1 / JCM 10045 / NBRC 100440) (Methanococcus jannaschii).